We begin with the raw amino-acid sequence, 136 residues long: ATP synthase epsilon chain (136 aa).

The segment at 112–136 (GNSADKLKAKESLNKARARSQAVGE) is disordered. The segment covering 116–125 (DKLKAKESLN) has biased composition (basic and acidic residues).

This sequence belongs to the ATPase epsilon chain family. In terms of assembly, F-type ATPases have 2 components, CF(1) - the catalytic core - and CF(0) - the membrane proton channel. CF(1) has five subunits: alpha(3), beta(3), gamma(1), delta(1), epsilon(1). CF(0) has three main subunits: a, b and c.

It localises to the cellular thylakoid membrane. In terms of biological role, produces ATP from ADP in the presence of a proton gradient across the membrane. The polypeptide is ATP synthase epsilon chain (Prochlorococcus marinus (strain SARG / CCMP1375 / SS120)).